Here is a 547-residue protein sequence, read N- to C-terminus: MRSDDVKAGYARAPNRSLIRSLGIDESEMHQPFIGIANSWNTIVPGHTHLRVLGERVREGITAGGGTPFEFNTIGICDGIAMGHEGMRYSLPSRENIADSVELMIQAHKFDGIVCICTCDKIVPGMLMAAGRCNIPAIVLTGGNMLPGNLHGCELSLTDVFEGVGKVAGGTMTEEELTELETAAMPGCGSCQGLYTANTMACMTEALGMSLPGCAATPAVYADKIRLAYRTGKRIVDLVRKQILPRDIITPASLRNAIRVDMALGGSTNTVLHLMAIATEAGVPFDLQEFNRLSEQIPHIASMMPAGPHSMQALHHAGGIPAVFRQIRSHLENCQTVSGMDIYTIADSVKYVDESVIRPEQSPVHQSGGLMILTGSLAPDGAVIKSGAVQDEMWKHTGPARVFDGEELAMKAILAREIKEGDIIVIRYEGPKGGPGMPEMLSPTSALVGLGYSRVALITDGRFSGGTRGPCIGHVAPEAAAGGPIAFVKDGDQISIDLFTKTVNLNISADEIENRKKGWKPLKRPLTGVLARYAAAVGPADLGAVLQ.

Asp-78 contacts Mg(2+). [2Fe-2S] cluster is bound at residue Cys-119. Mg(2+) contacts are provided by Asp-120 and Lys-121. At Lys-121 the chain carries N6-carboxylysine. Cys-191 provides a ligand contact to [2Fe-2S] cluster. Glu-439 provides a ligand contact to Mg(2+). Ser-464 (proton acceptor) is an active-site residue.

Belongs to the IlvD/Edd family. Homodimer. [2Fe-2S] cluster is required as a cofactor. It depends on Mg(2+) as a cofactor.

It catalyses the reaction (2R)-2,3-dihydroxy-3-methylbutanoate = 3-methyl-2-oxobutanoate + H2O. It carries out the reaction (2R,3R)-2,3-dihydroxy-3-methylpentanoate = (S)-3-methyl-2-oxopentanoate + H2O. It functions in the pathway amino-acid biosynthesis; L-isoleucine biosynthesis; L-isoleucine from 2-oxobutanoate: step 3/4. Its pathway is amino-acid biosynthesis; L-valine biosynthesis; L-valine from pyruvate: step 3/4. Functions in the biosynthesis of branched-chain amino acids. Catalyzes the dehydration of (2R,3R)-2,3-dihydroxy-3-methylpentanoate (2,3-dihydroxy-3-methylvalerate) into 2-oxo-3-methylpentanoate (2-oxo-3-methylvalerate) and of (2R)-2,3-dihydroxy-3-methylbutanoate (2,3-dihydroxyisovalerate) into 2-oxo-3-methylbutanoate (2-oxoisovalerate), the penultimate precursor to L-isoleucine and L-valine, respectively. In Methanospirillum hungatei JF-1 (strain ATCC 27890 / DSM 864 / NBRC 100397 / JF-1), this protein is Dihydroxy-acid dehydratase.